The sequence spans 136 residues: Large ribosomal subunit protein uL16 (136 aa).

This sequence belongs to the universal ribosomal protein uL16 family. In terms of assembly, part of the 50S ribosomal subunit.

Its function is as follows. Binds 23S rRNA and is also seen to make contacts with the A and possibly P site tRNAs. This is Large ribosomal subunit protein uL16 from Yersinia enterocolitica serotype O:8 / biotype 1B (strain NCTC 13174 / 8081).